Here is a 443-residue protein sequence, read N- to C-terminus: Probable cytosolic iron-sulfur protein assembly protein 1 (443 aa).

Disordered stretches follow at residues 1 to 27 (MSDPRPNTLSPLATLTPPSSSRTWQTA) and 95 to 124 (REEQGGNEDDFTNRRVGGAEDEDGRDDDDE). The span at 8 to 21 (TLSPLATLTPPSSS) shows a compositional bias: low complexity. WD repeat units lie at residues 14–57 (TLTP…LLHS) and 61–103 (GHKR…GNED). Acidic residues predominate over residues 113-124 (AEDEDGRDDDDE). 6 WD repeats span residues 135–174 (GHESEIKSLSWSPTGQYLATCSRDKSVWIWEELEDDNFET), 180–219 (EHDGDVKCVAWHPEEDLLASASYDDSVRLYREDSDDWVQV), 221–248 (CIAGKEGHGMTVWWVEFEGSGISGKDFR), 255–294 (SEEQTQHVDSMERSGPRLATCSDDRTVRIWRRKPRERAEN), 323–362 (VHERAIYSVSWSRTTGLIASAGSDGKIIIYKERWRKQTPN), and 391–440 (AHSV…DPPQ).

It belongs to the WD repeat CIA1 family.

In terms of biological role, essential component of the cytosolic iron-sulfur (Fe/S) protein assembly machinery. Required for the maturation of extramitochondrial Fe/S proteins. This Phaeosphaeria nodorum (strain SN15 / ATCC MYA-4574 / FGSC 10173) (Glume blotch fungus) protein is Probable cytosolic iron-sulfur protein assembly protein 1.